The sequence spans 155 residues: uncharacterized protein (155 aa).

The helical transmembrane segment at 5 to 25 (GIIICVGIAFLIFIFLWAYFK) threads the bilayer.

It is found in the membrane. This is an uncharacterized protein from Acheta domesticus (House cricket).